The following is a 249-amino-acid chain: MADS-box transcription factor 17 (249 aa).

The region spanning M1–G61 is the MADS-box domain. A K-box domain is found at H88–S178. Residues A228–L249 are disordered.

In terms of assembly, may interact with the K-box of MADS6. Expressed in the floral meristem, lodicule, palea, lemma, receptacle, empty glume, stamen, pistil, and ovule.

It is found in the nucleus. Functionally, probable transcription factor. Plays minor but redundant roles with MADS6 in floral development. The chain is MADS-box transcription factor 17 (MADS17) from Oryza sativa subsp. japonica (Rice).